The sequence spans 244 residues: 3-deoxy-manno-octulosonate cytidylyltransferase (244 aa).

The protein belongs to the KdsB family.

Its subcellular location is the cytoplasm. The enzyme catalyses 3-deoxy-alpha-D-manno-oct-2-ulosonate + CTP = CMP-3-deoxy-beta-D-manno-octulosonate + diphosphate. Its pathway is nucleotide-sugar biosynthesis; CMP-3-deoxy-D-manno-octulosonate biosynthesis; CMP-3-deoxy-D-manno-octulosonate from 3-deoxy-D-manno-octulosonate and CTP: step 1/1. It functions in the pathway bacterial outer membrane biogenesis; lipopolysaccharide biosynthesis. Activates KDO (a required 8-carbon sugar) for incorporation into bacterial lipopolysaccharide in Gram-negative bacteria. In Flavobacterium johnsoniae (strain ATCC 17061 / DSM 2064 / JCM 8514 / BCRC 14874 / CCUG 350202 / NBRC 14942 / NCIMB 11054 / UW101) (Cytophaga johnsonae), this protein is 3-deoxy-manno-octulosonate cytidylyltransferase.